An 83-amino-acid chain; its full sequence is Small ribosomal subunit protein eS21 (83 aa).

The protein belongs to the eukaryotic ribosomal protein eS21 family. In terms of assembly, component of the 40S small ribosomal subunit. Interacts with sta.

The protein resides in the cytoplasm. The protein localises to the cytosol. It localises to the rough endoplasmic reticulum. May be an associated component of the ribosome rather than a core structural subunit. May act as a translation initiation factor. Has a role in regulation of cell proliferation in the hematopoietic organs and the imaginal disks of larva. This Drosophila simulans (Fruit fly) protein is Small ribosomal subunit protein eS21 (RpS21).